A 572-amino-acid polypeptide reads, in one-letter code: Mitochondrial distribution and morphology protein 34 (572 aa).

The SMP-LTD domain occupies 1-195 (MAFNFNWSPL…LPAIIHRLSL (195 aa)). 4 disordered regions span residues 212 to 236 (TASA…VDAL), 355 to 426 (GAGR…PDND), 487 to 507 (HGAS…GSSR), and 552 to 572 (ACGP…AYGH). Residues 358–370 (RHSKAHARKRKKR) show a composition bias toward basic residues. Positions 371 to 381 (VVDLRRPKTTD) are enriched in basic and acidic residues. The segment covering 387-400 (SDESSFTESTSAPS) has biased composition (polar residues).

The protein belongs to the MDM34 family. As to quaternary structure, component of the ER-mitochondria encounter structure (ERMES) or MDM complex, composed of mmm1, mdm10, mdm12 and mdm34.

Its subcellular location is the mitochondrion outer membrane. Component of the ERMES/MDM complex, which serves as a molecular tether to connect the endoplasmic reticulum (ER) and mitochondria. Components of this complex are involved in the control of mitochondrial shape and protein biogenesis, and function in nonvesicular lipid trafficking between the ER and mitochondria. Mdm34 is required for the interaction of the ER-resident membrane protein mmm1 and the outer mitochondrial membrane-resident beta-barrel protein mdm10. The protein is Mitochondrial distribution and morphology protein 34 of Aspergillus fumigatus (strain ATCC MYA-4609 / CBS 101355 / FGSC A1100 / Af293) (Neosartorya fumigata).